The sequence spans 447 residues: Multicopper oxidase mco (447 aa).

The segment covering methionine 1 to lysine 25 has biased composition (basic and acidic residues). The disordered stretch occupies residues methionine 1–serine 29. Cu cation contacts are provided by histidine 107, histidine 109, histidine 147, histidine 149, histidine 375, histidine 378, histidine 380, histidine 428, cysteine 429, histidine 430, histidine 434, and methionine 439.

The protein belongs to the multicopper oxidase family. The cofactor is Cu cation.

The protein localises to the cytoplasm. Its function is as follows. May be involved in copper homeostasis and oxidative stress response. This is Multicopper oxidase mco (mco) from Staphylococcus haemolyticus (strain JCSC1435).